The following is a 1002-amino-acid chain: DNA-directed RNA polymerase 1, mitochondrial (1002 aa).

The N-terminal 21 residues, 1–21, are a transit peptide targeting the mitochondrion; that stretch reads MWRYISKQAYSRKFRNSHDSA. Residues Asp703, Lys778, and Asp935 contribute to the active site.

The protein belongs to the phage and mitochondrial RNA polymerase family. In terms of tissue distribution, the highest levels of expression are detected in the mature leaves. The level of expression is lowest in the cotyledons.

Its subcellular location is the mitochondrion. The catalysed reaction is RNA(n) + a ribonucleoside 5'-triphosphate = RNA(n+1) + diphosphate. Its function is as follows. DNA-dependent RNA polymerase catalyzes the transcription of DNA into RNA using the four ribonucleoside triphosphates as substrates. In Nicotiana sylvestris (Wood tobacco), this protein is DNA-directed RNA polymerase 1, mitochondrial (RPOT1).